Reading from the N-terminus, the 566-residue chain is Heat shock protein 70 homolog C57A7.12 (566 aa).

ATP is bound at residue 39 to 46 (AFNRDGKT). Phosphoserine is present on residues Ser-86 and Ser-500.

The protein belongs to the heat shock protein 70 family.

The protein is Heat shock protein 70 homolog C57A7.12 of Schizosaccharomyces pombe (strain 972 / ATCC 24843) (Fission yeast).